A 432-amino-acid chain; its full sequence is Adhesin YadA (432 aa).

An N-terminal signal peptide occupies residues 1 to 25 (MTKDFKISVSAALISALFSSPYAFA). Residues 26–340 (EEPEDGNDGI…KKAISESNQY (315 aa)) are surface exposed passenger domain. A coiled-coil region spans residues 242–263 (VNVAQLKKEMAETLENARKETL). The segment at 341-379 (TDHKFSQLDNRLDKLDKRVDKGLASSAALNSLFQPYGVG) is outer membrane translocation of the passenger domain. 4 beta stranded membrane passes run 379 to 389 (GKVNFTAGVGG), 393 to 404 (SQALAIGSGYRV), 411 to 417 (KAGVAYA), and 421 to 432 (NVMYNASFNIEW). Residues 380-432 (KVNFTAGVGGYRSSQALAIGSGYRVNESVALKAGVAYAGSSNVMYNASFNIEW) are translocator domain.

Belongs to the autotransporter-2 (AT-2) (TC 1.B.40) family. As to quaternary structure, homotrimer.

It localises to the cell surface. It is found in the cell outer membrane. Collagen-binding outer membrane protein forming a fibrillar matrix on the bacterial cell surface. Promotes attachment to eukaryotic cells and after invasion, is the major adhesin in infected tissue. Constitutes an alternative uptake pathway under conditions in which invasin synthesis is repressed. The sequence is that of Adhesin YadA (yadA) from Yersinia pseudotuberculosis serotype I (strain IP32953).